The sequence spans 184 residues: Nutrient stress-induced DNA-binding protein (184 aa).

The protein belongs to the Dps family. Hexamer.

Functionally, involved in protection of chromosomal DNA from damage under nutrient-limited and oxidative stress conditions. Binds heme. The protein is Nutrient stress-induced DNA-binding protein (dpsA) of Nostoc sp. (strain PCC 7120 / SAG 25.82 / UTEX 2576).